The sequence spans 137 residues: NADH dehydrogenase [ubiquinone] 1 beta subcomplex subunit 7 (137 aa).

Residue Gly2 is the site of N-myristoyl glycine attachment. One can recognise a CHCH domain in the interval Arg56–Arg98. The Cx9C motif 1 motif lies at Cys59 to Cys69. 2 cysteine pairs are disulfide-bonded: Cys59–Cys90 and Cys69–Cys80. Position 73 is a phosphoserine (Ser73). A Cx9C motif 2 motif is present at residues Cys80–Cys90. Positions Lys113–Leu137 are disordered.

This sequence belongs to the complex I NDUFB7 subunit family. As to quaternary structure, complex I is composed of 45 different subunits.

The protein resides in the mitochondrion inner membrane. Its subcellular location is the mitochondrion intermembrane space. In terms of biological role, accessory subunit of the mitochondrial membrane respiratory chain NADH dehydrogenase (Complex I), that is believed not to be involved in catalysis. Complex I functions in the transfer of electrons from NADH to the respiratory chain. The immediate electron acceptor for the enzyme is believed to be ubiquinone. The chain is NADH dehydrogenase [ubiquinone] 1 beta subcomplex subunit 7 (NDUFB7) from Gorilla gorilla gorilla (Western lowland gorilla).